Consider the following 138-residue polypeptide: Phosphoribosyl-AMP cyclohydrolase (138 aa).

Asp-84 contacts Mg(2+). A Zn(2+)-binding site is contributed by Cys-85. Positions 86 and 88 each coordinate Mg(2+). Cys-102 and Cys-109 together coordinate Zn(2+).

This sequence belongs to the PRA-CH family. As to quaternary structure, homodimer. Requires Mg(2+) as cofactor. The cofactor is Zn(2+).

Its subcellular location is the cytoplasm. The catalysed reaction is 1-(5-phospho-beta-D-ribosyl)-5'-AMP + H2O = 1-(5-phospho-beta-D-ribosyl)-5-[(5-phospho-beta-D-ribosylamino)methylideneamino]imidazole-4-carboxamide. It functions in the pathway amino-acid biosynthesis; L-histidine biosynthesis; L-histidine from 5-phospho-alpha-D-ribose 1-diphosphate: step 3/9. In terms of biological role, catalyzes the hydrolysis of the adenine ring of phosphoribosyl-AMP. The polypeptide is Phosphoribosyl-AMP cyclohydrolase (Burkholderia multivorans (strain ATCC 17616 / 249)).